The following is a 410-amino-acid chain: Multifunctional CCA protein (410 aa).

ATP contacts are provided by Gly-8 and Arg-11. CTP contacts are provided by Gly-8 and Arg-11. 2 residues coordinate Mg(2+): Glu-21 and Asp-23. Residues Arg-91, Arg-137, and Arg-140 each coordinate ATP. Residues Arg-91, Arg-137, and Arg-140 each contribute to the CTP site. Residues 228–329 (TGIHVMMALR…LKLFDRLDVW (102 aa)) form the HD domain.

It belongs to the tRNA nucleotidyltransferase/poly(A) polymerase family. Bacterial CCA-adding enzyme type 1 subfamily. As to quaternary structure, monomer. Can also form homodimers and oligomers. The cofactor is Mg(2+). It depends on Ni(2+) as a cofactor.

It catalyses the reaction a tRNA precursor + 2 CTP + ATP = a tRNA with a 3' CCA end + 3 diphosphate. The enzyme catalyses a tRNA with a 3' CCA end + 2 CTP + ATP = a tRNA with a 3' CCACCA end + 3 diphosphate. In terms of biological role, catalyzes the addition and repair of the essential 3'-terminal CCA sequence in tRNAs without using a nucleic acid template. Adds these three nucleotides in the order of C, C, and A to the tRNA nucleotide-73, using CTP and ATP as substrates and producing inorganic pyrophosphate. tRNA 3'-terminal CCA addition is required both for tRNA processing and repair. Also involved in tRNA surveillance by mediating tandem CCA addition to generate a CCACCA at the 3' terminus of unstable tRNAs. While stable tRNAs receive only 3'-terminal CCA, unstable tRNAs are marked with CCACCA and rapidly degraded. The sequence is that of Multifunctional CCA protein from Tolumonas auensis (strain DSM 9187 / NBRC 110442 / TA 4).